Reading from the N-terminus, the 346-residue chain is GTPase Obg (346 aa).

The Obg domain occupies 1–159 (MKFLDSAKIY…RTVLLRLKLI (159 aa)). In terms of domain architecture, OBG-type G spans 160–327 (ADAGLVGLPN…ALRAVLAEID (168 aa)). Residues 166–173 (GLPNAGKS), 191–195 (FTTLN), 212–215 (DIPG), 279–282 (SKVD), and 308–310 (SAA) each bind GTP. Residues serine 173 and threonine 193 each coordinate Mg(2+).

This sequence belongs to the TRAFAC class OBG-HflX-like GTPase superfamily. OBG GTPase family. As to quaternary structure, monomer. Requires Mg(2+) as cofactor.

The protein localises to the cytoplasm. Functionally, an essential GTPase which binds GTP, GDP and possibly (p)ppGpp with moderate affinity, with high nucleotide exchange rates and a fairly low GTP hydrolysis rate. Plays a role in control of the cell cycle, stress response, ribosome biogenesis and in those bacteria that undergo differentiation, in morphogenesis control. The sequence is that of GTPase Obg from Methylocella silvestris (strain DSM 15510 / CIP 108128 / LMG 27833 / NCIMB 13906 / BL2).